Here is a 493-residue protein sequence, read N- to C-terminus: Mitochondrial distribution and morphology protein 10 (493 aa).

It belongs to the MDM10 family. As to quaternary structure, component of the ER-mitochondria encounter structure (ERMES) or MDM complex, composed of MMM1, MDM10, MDM12 and MDM34. Associates with the mitochondrial outer membrane sorting assembly machinery SAM(core) complex, which consists of SAM35, SAM37 and SAM50, to form a SAM(holo) complex.

It localises to the mitochondrion outer membrane. In terms of biological role, component of the ERMES/MDM complex, which serves as a molecular tether to connect the endoplasmic reticulum and mitochondria. Components of this complex are involved in the control of mitochondrial shape and protein biogenesis and may function in phospholipid exchange. MDM10 is involved in the late assembly steps of the general translocase of the mitochondrial outer membrane (TOM complex). Functions in the TOM40-specific route of the assembly of outer membrane beta-barrel proteins, including the association of TOM40 with the receptor TOM22 and small TOM proteins. Can associate with the SAM(core) complex as well as the MDM12-MMM1 complex, both involved in late steps of the major beta-barrel assembly pathway, that is responsible for biogenesis of all outer membrane beta-barrel proteins. May act as a switch that shuttles between both complexes and channels precursor proteins into the TOM40-specific pathway. Plays a role in mitochondrial morphology and in the inheritance of mitochondria. This chain is Mitochondrial distribution and morphology protein 10, found in Saccharomyces cerevisiae (strain YJM789) (Baker's yeast).